A 658-amino-acid polypeptide reads, in one-letter code: Glycogen debranching enzyme (658 aa).

The active-site Nucleophile is the D336. E371 functions as the Proton donor in the catalytic mechanism. Residues E459–G484 are disordered.

Belongs to the glycosyl hydrolase 13 family.

It carries out the reaction Hydrolysis of (1-&gt;6)-alpha-D-glucosidic linkages to branches with degrees of polymerization of three or four glucose residues in limit dextrin.. Its pathway is glycan degradation; glycogen degradation. Functionally, removes maltotriose and maltotetraose chains that are attached by 1,6-alpha-linkage to the limit dextrin main chain, generating a debranched limit dextrin. This is Glycogen debranching enzyme from Salmonella paratyphi A (strain ATCC 9150 / SARB42).